Consider the following 474-residue polypeptide: Hepatocyte nuclear factor 4-alpha (474 aa).

A DNA-binding region (nuclear receptor) is located at residues 57 to 132 (SALCAICGDR…AGMKKEAVQN (76 aa)). 2 NR C4-type zinc fingers span residues 60–80 (CAIC…CDGC) and 96–120 (CRFS…LKKC). A phosphoserine mark is found at Ser142 and Ser143. Tyr144 carries the post-translational modification Phosphotyrosine. The NR LBD domain occupies 147-377 (SSLPSINALL…NLLQEMLLGG (231 aa)). At Thr166 the chain carries Phosphothreonine. Ser167 carries the phosphoserine modification. Glycyl lysine isopeptide (Lys-Gly) (interchain with G-Cter in ubiquitin) cross-links involve residues Lys234 and Lys307. Phosphoserine; by AMPK is present on Ser313. Positions 368–376 (NLLQEMLLG) match the 9aaTAD motif. Residues 413–450 (SNGQMCEWPRPRGQAATPETPQPSPPSGSGSESYKLLP) form a disordered region. Phosphothreonine is present on residues Thr429 and Thr432. Position 436 is a phosphoserine (Ser436). Lys458 is subject to N6-acetyllysine.

This sequence belongs to the nuclear hormone receptor family. NR2 subfamily. Homodimerization is required for HNF4-alpha to bind to its recognition site. Interacts with CLOCK, BMAL1 and PER1. Interacts with PER2. Interacts with CRY1 and CRY2. Interacts with NR0B2/SHP; the resulting heterodimer is transcriptionally inactive. Interacts with DDX3X; this interaction disrupts the interaction between HNF4 and NR0B2 that forms inactive heterodimers and enhances the formation of active HNF4 homodimers. Phosphorylated on tyrosine residue(s); phosphorylation is important for its DNA-binding activity. Phosphorylation may directly or indirectly play a regulatory role in the subnuclear distribution. Phosphorylation at Ser-313 by AMPK reduces the ability to form homodimers and bind DNA. Post-translationally, acetylation at Lys-458 lowers transcriptional activation by about two-fold. In terms of tissue distribution, expressed in the liver, pancreas and colon in a circadian manner.

It localises to the nucleus. Its function is as follows. Transcriptional regulator which controls the expression of hepatic genes during the transition of endodermal cells to hepatic progenitor cells, facilitatating the recruitment of RNA pol II to the promoters of target genes. Activates the transcription of CYP2C38. Represses the CLOCK-BMAL1 transcriptional activity and is essential for circadian rhythm maintenance and period regulation in the liver and colon cells. In Mus musculus (Mouse), this protein is Hepatocyte nuclear factor 4-alpha (Hnf4a).